Consider the following 484-residue polypeptide: UDP-N-acetylmuramate--L-alanine ligase (484 aa).

Position 124–130 (124–130 (GTHGKTT)) interacts with ATP.

It belongs to the MurCDEF family.

It localises to the cytoplasm. The catalysed reaction is UDP-N-acetyl-alpha-D-muramate + L-alanine + ATP = UDP-N-acetyl-alpha-D-muramoyl-L-alanine + ADP + phosphate + H(+). It functions in the pathway cell wall biogenesis; peptidoglycan biosynthesis. Functionally, cell wall formation. This is UDP-N-acetylmuramate--L-alanine ligase from Pseudoalteromonas atlantica (strain T6c / ATCC BAA-1087).